Here is a 94-residue protein sequence, read N- to C-terminus: Lipolysis-activating peptide 1-beta chain (94 aa).

The N-terminal stretch at 1–19 (MKILAVVLISVIVLNTANG) is a signal peptide. Residues 20-87 (ENYYPQKYTN…YFNALESQCP (68 aa)) form the LCN-type CS-alpha/beta domain. Intrachain disulfides connect Cys-34/Cys-56, Cys-42/Cys-66, and Cys-46/Cys-68.

The protein belongs to the long (3 C-C) scorpion toxin superfamily. Homodimer; disulfide-linked or monomer (edited version) or heterodimer of an alpha chain (AC P0CI44 or AC P0CI45) and this beta chain (non-edited version). As to expression, expressed by the venom gland.

It is found in the secreted. Functionally, the homodimer inhibits HMG-CoA reductase (HMGCR) (32% of inhibition produced by 0.6 uM), a glycoprotein involved in the control of cholesterol biosynthesis. The inhibitory effects of bumarsin are seen at much lower concentrations (0.6 uM) than that for statins such as atorvastatin (5 mM) and simvastatin (10 uM). In addition to inhibition of HMG-CoA reductase, this protein lowers cholesterol levels by inducing steroid hormone synthesis via StAR, and by increasing reverse cholesterol transport mediated by the induction of ABCA1 and APOA1. The heterodimer non-edited LVP1 induces lipolysis in rat adipocytes. Induction of lipolysis by LVP1 appears to be mediated through the beta-2 adrenergic receptor pathway (ADRB2). In terms of biological role, the monomer edited version, similar to alpha-toxins, may modulate voltage-gated sodium channels (Nav) and may block voltage-gated potassium channels (Kv). The polypeptide is Lipolysis-activating peptide 1-beta chain (Lychas mucronatus (Chinese swimming scorpion)).